The following is a 1136-amino-acid chain: Probable RNA-dependent RNA polymerase 2 (1136 aa).

The segment at 965-989 (SGDSGALSSSSAQPSPTYDPDLEVP) is disordered. Over residues 967 to 980 (DSGALSSSSAQPSP) the composition is skewed to low complexity.

Belongs to the RdRP family.

It catalyses the reaction RNA(n) + a ribonucleoside 5'-triphosphate = RNA(n+1) + diphosphate. Probably involved in the RNA silencing pathway and required for the generation of small interfering RNAs (siRNAs). The chain is Probable RNA-dependent RNA polymerase 2 (RDR2) from Oryza sativa subsp. japonica (Rice).